The following is a 283-amino-acid chain: ATP phosphoribosyltransferase (283 aa).

This sequence belongs to the ATP phosphoribosyltransferase family. Long subfamily. Mg(2+) serves as cofactor.

It is found in the cytoplasm. It carries out the reaction 1-(5-phospho-beta-D-ribosyl)-ATP + diphosphate = 5-phospho-alpha-D-ribose 1-diphosphate + ATP. The protein operates within amino-acid biosynthesis; L-histidine biosynthesis; L-histidine from 5-phospho-alpha-D-ribose 1-diphosphate: step 1/9. Its activity is regulated as follows. Feedback inhibited by histidine. Catalyzes the condensation of ATP and 5-phosphoribose 1-diphosphate to form N'-(5'-phosphoribosyl)-ATP (PR-ATP). Has a crucial role in the pathway because the rate of histidine biosynthesis seems to be controlled primarily by regulation of HisG enzymatic activity. The sequence is that of ATP phosphoribosyltransferase from Parabacteroides distasonis (strain ATCC 8503 / DSM 20701 / CIP 104284 / JCM 5825 / NCTC 11152).